The following is a 231-amino-acid chain: L-ribulose-5-phosphate 4-epimerase (231 aa).

Residues 27–28 (GN), 44–45 (SG), and 73–74 (SS) contribute to the substrate site. Zn(2+) contacts are provided by Asp-75, His-94, and His-96. Asp-119 acts as the Proton donor/acceptor in catalysis. His-168 is a binding site for Zn(2+). Tyr-226 acts as the Proton donor/acceptor in catalysis.

Belongs to the aldolase class II family. AraD/FucA subfamily. Requires Zn(2+) as cofactor.

It catalyses the reaction L-ribulose 5-phosphate = D-xylulose 5-phosphate. The protein operates within carbohydrate degradation; L-arabinose degradation via L-ribulose; D-xylulose 5-phosphate from L-arabinose (bacterial route): step 3/3. In terms of biological role, involved in the degradation of L-arabinose. Catalyzes the interconversion of L-ribulose 5-phosphate (LRu5P) and D-xylulose 5-phosphate (D-Xu5P) via a retroaldol/aldol mechanism (carbon-carbon bond cleavage analogous to a class II aldolase reaction). This is L-ribulose-5-phosphate 4-epimerase (araD) from Halalkalibacterium halodurans (strain ATCC BAA-125 / DSM 18197 / FERM 7344 / JCM 9153 / C-125) (Bacillus halodurans).